The primary structure comprises 861 residues: E3 ubiquitin-protein ligase SH3RF1 (861 aa).

The RING-type zinc-finger motif lies at 12–53 (CPVCLERLDASAKVLPCQHTFCKRCLLGIVSSRNELRCPECR). SH3 domains follow at residues 132-191 (PQLP…IIKP) and 194-257 (QPPP…FNSA). Residues 268–319 (SGVDTGEGSSGTTHSSNSQKQADAKKNTKKRHSFTSLTMSNKSSQSVQNRHS) form a disordered region. Residues 273–285 (GEGSSGTTHSSNS) are compositionally biased toward low complexity. The span at 301 to 317 (FTSLTMSNKSSQSVQNR) shows a compositional bias: polar residues. Positions 435-496 (TRPSVFVAIY…PGNYVAPVTR (62 aa)) constitute an SH3 3 domain. Residues 684–731 (NSAANKQDKDSKKEKKGLLKLLSGASTKRKPRSSPPHSPTQELEQTNS) are disordered. A compositionally biased stretch (basic and acidic residues) spans 689–700 (KQDKDSKKEKKG). In terms of domain architecture, SH3 4 spans 802 to 861 (RPCERYRVVVSYPPQSEAELELKEGDIVFVHKKREDGWFKGTLQRNGKTGLFPGSFVENI).

This sequence belongs to the SH3RF family. In terms of processing, autoubiquitinated. Ubiquitinated by SH3RF2, leading to proteasome-mediated degradation.

It localises to the cytoplasm. It is found in the perinuclear region. The protein localises to the cell projection. The protein resides in the lamellipodium. Its subcellular location is the golgi apparatus. It localises to the trans-Golgi network. The enzyme catalyses S-ubiquitinyl-[E2 ubiquitin-conjugating enzyme]-L-cysteine + [acceptor protein]-L-lysine = [E2 ubiquitin-conjugating enzyme]-L-cysteine + N(6)-ubiquitinyl-[acceptor protein]-L-lysine.. Its pathway is protein modification; protein ubiquitination. Its function is as follows. Has E3 ubiquitin-protein ligase activity. In the absence of an external substrate, it can catalyze self-ubiquitination. Acts as a scaffold protein that contributes to the effective activation of the JNK signaling pathway. This chain is E3 ubiquitin-protein ligase SH3RF1 (sh3rf1), found in Xenopus tropicalis (Western clawed frog).